Here is a 2822-residue protein sequence, read N- to C-terminus: Piezo-type mechanosensitive ion channel component 2 (2822 aa).

Residues Met1–Arg12 are Cytoplasmic-facing. The chain crosses the membrane as a helical span at residues Leu13 to Ala24. At Phe25–Leu30 the chain is on the extracellular side. Residues Ser31–Leu43 traverse the membrane as a helical segment. At Phe44 to Ala50 the chain is on the cytoplasmic side. The chain crosses the membrane as a helical span at residues Thr51–Ile76. Over Phe77–Val122 the chain is Extracellular. An N-linked (GlcNAc...) asparagine glycan is attached at Asn95. The helical transmembrane segment at Phe123–Arg141 threads the bilayer. At Thr142–Thr221 the chain is on the cytoplasmic side. A helical membrane pass occupies residues Ala222 to Met237. Over Leu238–Ser240 the chain is Extracellular. Residues Leu241–Ser258 traverse the membrane as a helical segment. Residues Trp259–Asp264 lie on the Cytoplasmic side of the membrane. Residues Pro265–Tyr287 form a helical membrane-spanning segment. Topologically, residues Leu288–His335 are extracellular. A helical transmembrane segment spans residues Ala336–Trp355. The Cytoplasmic segment spans residues Leu356 to Val492. The segment at Tyr450–Lys481 is disordered. Residues Ser455–Arg482 are a coiled coil. A compositionally biased stretch (acidic residues) spans Glu463–Ser477. Residues Phe493 to Thr514 traverse the membrane as a helical segment. At Tyr515–Leu519 the chain is on the extracellular side. The chain crosses the membrane as a helical span at residues Thr520 to Trp531. Residues Met532–Asn535 are Cytoplasmic-facing. Residues Arg536–Ser562 traverse the membrane as a helical segment. At Phe563–Leu583 the chain is on the extracellular side. A helical membrane pass occupies residues Ala584 to Leu614. The Cytoplasmic segment spans residues Ser615–Lys689. Composition is skewed to acidic residues over residues Leu624–Gln633 and Glu643–Ile652. Residues Leu624–Glu668 form a disordered region. Over residues Lys653–Glu662 the composition is skewed to basic and acidic residues. The helical transmembrane segment at Tyr690–Ser703 threads the bilayer. Residues Phe704–Val709 lie on the Extracellular side of the membrane. The helical transmembrane segment at Met710–Val728 threads the bilayer. At His729–Leu737 the chain is on the cytoplasmic side. A helical transmembrane segment spans residues Lys738–Thr757. Residues Tyr758–Ala789 are Extracellular-facing. The chain crosses the membrane as a helical span at residues Glu790–Tyr811. Topologically, residues Phe812 to Leu957 are cytoplasmic. At Ser856 the chain carries Phosphoserine. Basic and acidic residues predominate over residues Gln875–Ser901. The disordered stretch occupies residues Gln875 to Ser919. Acidic residues predominate over residues Asp902 to Ser919. A helical membrane pass occupies residues His958–Lys973. Over Glu974–Asn979 the chain is Extracellular. Residues Tyr980–Ala989 traverse the membrane as a helical segment. The Cytoplasmic portion of the chain corresponds to Leu990–Arg997. A helical transmembrane segment spans residues Ala998–Gln1018. The Extracellular segment spans residues Leu1019–Leu1074. Asn1030 carries N-linked (GlcNAc...) asparagine glycosylation. The cysteines at positions 1031 and 1209 are disulfide-linked. The helical transmembrane segment at Arg1075–Gly1099 threads the bilayer. The Cytoplasmic portion of the chain corresponds to Arg1100–Gly1140. Residues Leu1141–Arg1155 traverse the membrane as a helical segment. Residues Met1156–Asp1157 are Extracellular-facing. A helical membrane pass occupies residues Phe1158–Leu1171. The Cytoplasmic portion of the chain corresponds to Tyr1172–Val1182. A helical membrane pass occupies residues Trp1183–Ile1202. Residues Gly1203–Asn1239 lie on the Extracellular side of the membrane. The chain crosses the membrane as a helical span at residues Pro1240–Phe1260. At Glu1261–Leu1314 the chain is on the cytoplasmic side. A helical transmembrane segment spans residues Phe1315–Thr1327. Topologically, residues Thr1328 to Phe1333 are extracellular. The chain crosses the membrane as a helical span at residues Cys1334–Leu1346. The Cytoplasmic segment spans residues Phe1347–Pro1355. Residues Ile1356–Ser1381 traverse the membrane as a helical segment. The Extracellular portion of the chain corresponds to Ile1382–Ile1430. The helical transmembrane segment at Trp1431–Met1447 threads the bilayer. The Cytoplasmic segment spans residues Ser1448–Arg1991. Residues Thr1475–Met1515 adopt a coiled-coil conformation. Disordered stretches follow at residues Gln1505–Gln1551 and Leu1611–Asp1653. The segment covering Leu1611–Leu1621 has biased composition (basic residues). The segment covering Ala1622 to Ser1633 has biased composition (basic and acidic residues). The helical transmembrane segment at Ser1992–Thr2006 threads the bilayer. The Extracellular portion of the chain corresponds to Ser2007–Leu2013. A helical membrane pass occupies residues Leu2014–Leu2025. Residues Ser2026 to Ser2031 lie on the Cytoplasmic side of the membrane. The chain crosses the membrane as a helical span at residues Arg2032 to Gln2053. The Extracellular segment spans residues Phe2054–Val2086. A helical membrane pass occupies residues Leu2087–Cys2105. The Cytoplasmic segment spans residues His2106–Val2259. 2 disordered regions span residues Asp2120 to Asp2139 and Ile2164 to Ser2205. Residues Cys2170 to Ser2197 show a composition bias toward low complexity. Residues Tyr2260 to Trp2279 traverse the membrane as a helical segment. The Extracellular segment spans residues Ala2280–Gly2301. The helical transmembrane segment at Pro2302 to Leu2322 threads the bilayer. Residues Arg2323 to Val2326 lie on the Cytoplasmic side of the membrane. A helical membrane pass occupies residues Leu2327–Gly2350. The Extracellular portion of the chain corresponds to Val2351–Asn2359. Residues Leu2360 to Cys2382 traverse the membrane as a helical segment. The Cytoplasmic segment spans residues Gly2383–Lys2467. A helical transmembrane segment spans residues Lys2468–Leu2491. Residues Phe2492 to Gly2739 lie on the Extracellular side of the membrane. The N-linked (GlcNAc...) asparagine glycan is linked to Asn2692. A helical membrane pass occupies residues Ile2740 to Ser2760. The Cytoplasmic segment spans residues Gly2761–Asn2822.

It belongs to the PIEZO (TC 1.A.75) family. In terms of assembly, homotrimer; the homotrimer forms a propeller-shaped Piezo channel with a cation-ion conducting pore. Heterotrimeric interaction may occur between PIEZO1 and PIEZO2. Interacts with STOM13. Interacts with TMC7; the interaction inhibits PIEZO2-conducted mechanically activated currents. Interacts with TMC1; the interaction may be part of the MET complex. Interacts with MDFIC (via C-terminus); the interaction prolongs Piezo channel inactivation. Interacts with MDFI (via C-terminus); the interaction prolongs Piezo channel inactivation. In terms of tissue distribution, expressed in bladder, colon, and lung, but less abundant in kidney or skin. Strong expression is observed in dorsal root ganglia (DRG) sensory neurons. Expressed in a wide range of cutaneous low-threshold mechanoreceptors (LTMRs), including Merkel cells and Meissner's corpuscles. Expressed in sensory neurons. Expressed in cochlear inner and outer hair cells and vestibular organ hair cells. Expressed in pulmonary neuroepithelial cell bodies. Expressed in bladder urothelium and sensory neurons of the lower urinary tract. Expressed in sensory endings of proprioceptors innervating muscle spindles and Golgi tendon organs.

It localises to the cell membrane. It catalyses the reaction Ca(2+)(in) = Ca(2+)(out). Regulated by auxillary subunits MDFIC and MDFI. Channel activity is inhibited by TMEM120aa. Phosphatidic acid and lysophosphatidic acid inhibit Piezo2 channel activity. Functionally, pore-forming subunit of the mechanosensitive non-specific cation Piezo channel required for rapidly adapting mechanically activated (MA) currents and has a key role in sensing touch and tactile pain. Piezo channels are homotrimeric three-blade propeller-shaped structures that utilize a cap-motion and plug-and-latch mechanism to gate their ion-conducting pathways. Expressed in sensory neurons, is essential for diverse physiological processes, including respiratory control, systemic metabolism, urinary function, and proprioception. Mediates airway stretch sensing, enabling efficient respiration at birth and maintaining normal breathing in adults. It regulates brown and beige adipose tissue morphology and function, preventing systemic hypermetabolism. In the lower urinary tract, acts as a sensor in both the bladder urothelium and innervating sensory neurons and is required for bladder-stretch sensing and urethral micturition reflexes, ensuring proper urinary function. Additionally, Piezo2 serves as the principal mechanotransducer in proprioceptors, facilitating proprioception and coordinated body movements. In inner ear hair cells, PIEZO1/2 subunits may constitute part of the mechanotransducer (MET) non-selective cation channel complex where they may act as pore-forming ion-conducting component in the complex. Required for Merkel-cell mechanotransduction. Plays a major role in light-touch mechanosensation. The chain is Piezo-type mechanosensitive ion channel component 2 from Mus musculus (Mouse).